Reading from the N-terminus, the 259-residue chain is Protein SODIUM POTASSIUM ROOT DEFECTIVE 2 (259 aa).

A disordered region spans residues 141-165 (PDSITGSVDQDPAKTVEAEAPAGED). Residues 151–165 (DPAKTVEAEAPAGED) are compositionally biased toward basic and acidic residues. An HMA domain is found at 180–246 (QQVVVLKVSL…KVKNAQFWTN (67 aa)). A metal cation-binding residues include Cys191 and Cys194.

The chain is Protein SODIUM POTASSIUM ROOT DEFECTIVE 2 from Arabidopsis thaliana (Mouse-ear cress).